The sequence spans 144 residues: Large ribosomal subunit protein uL15 (144 aa).

Residues 1–52 are disordered; it reads MRLNTLSPANGARHSRKRLGRGIGSGFGKTSGRGHKGQKSRSGSSIRRGFEG. Residues 21-31 show a composition bias toward gly residues; it reads RGIGSGFGKTS.

It belongs to the universal ribosomal protein uL15 family. In terms of assembly, part of the 50S ribosomal subunit.

Functionally, binds to the 23S rRNA. The sequence is that of Large ribosomal subunit protein uL15 from Buchnera aphidicola subsp. Acyrthosiphon pisum (strain 5A).